The following is a 465-amino-acid chain: Iron transporter FTH1 (465 aa).

At 1–11 the chain is on the vacuolar side; it reads MAFEDYFSFQI. A helical transmembrane segment spans residues 12–32; that stretch reads FFIFLRESLEIVVIVSILLTI. Residues 33 to 135 lie on the Cytoplasmic side of the membrane; the sequence is VKQGLSVEDD…LYQKLKIQIL (103 aa). The disordered stretch occupies residues 44–66; the sequence is PFEGSSSSAGLPSPNTNTNADST. Residues 46–66 are compositionally biased toward polar residues; sequence EGSSSSAGLPSPNTNTNADST. Residues 136–156 form a helical membrane-spanning segment; the sequence is AGGAFGLLLCMLIGGAFVSIF. Topologically, residues 157–170 are vacuolar; the sequence is YHIGTDLWTLSEHY. The helical transmembrane segment at 171-191 threads the bilayer; it reads YEGVLSLVASVIISVMGLFFL. The Cytoplasmic portion of the chain corresponds to 192–289; that stretch reads RMGKLREKFR…FFFRYSSSLS (98 aa). The chain crosses the membrane as a helical span at residues 290–310; the sequence is LKICLVVATCFLYLIAAGLFS. Over 311-358 the chain is Vacuolar; sequence KGVWQLELQDYVNKCNGQDMSEVGNGPGSYDISRSVWHVNCCNGEKDG. A helical transmembrane segment spans residues 359–379; that stretch reads GWMIFTAIFGWTNSATVGSVI. At 380–465 the chain is on the cytoplasmic side; the sequence is SYNAYWLVLI…LIIDSSGSAN (86 aa). Positions 433-465 are disordered; that stretch reads TSELNSSTSEPDSQRRSKDSSVPLIIDSSGSAN. Phosphoserine is present on residues S449 and S453.

The protein belongs to the oxidase-dependent Fe transporter (OFeT) (TC 9.A.10.1) family. Interacts with FET5.

It is found in the vacuole membrane. High affinity iron transporter probably involved in transport of intravacuolar stores of iron. This Saccharomyces cerevisiae (strain ATCC 204508 / S288c) (Baker's yeast) protein is Iron transporter FTH1 (FTH1).